A 329-amino-acid chain; its full sequence is DNA-directed RNA polymerase subunit alpha (329 aa).

Residues 1 to 231 (MQTNLLKPKT…EQLAVFAQLE (231 aa)) form an alpha N-terminal domain (alpha-NTD) region. Positions 249–329 (FDPILLRPVD…SWPPAGLDKR (81 aa)) are alpha C-terminal domain (alpha-CTD).

The protein belongs to the RNA polymerase alpha chain family. In terms of assembly, homodimer. The RNAP catalytic core consists of 2 alpha, 1 beta, 1 beta' and 1 omega subunit. When a sigma factor is associated with the core the holoenzyme is formed, which can initiate transcription.

It catalyses the reaction RNA(n) + a ribonucleoside 5'-triphosphate = RNA(n+1) + diphosphate. DNA-dependent RNA polymerase catalyzes the transcription of DNA into RNA using the four ribonucleoside triphosphates as substrates. This is DNA-directed RNA polymerase subunit alpha from Polaromonas sp. (strain JS666 / ATCC BAA-500).